Reading from the N-terminus, the 459-residue chain is 5-hydroxytryptamine receptor 2C (459 aa).

The N-terminal stretch at M1–A32 is a signal peptide. Residues I33–W56 are Extracellular-facing. The chain crosses the membrane as a helical span at residues P57–M81. Topologically, residues E82–N87 are cytoplasmic. Residues A88–L112 form a helical membrane-spanning segment. The Extracellular portion of the chain corresponds to L113–P129. Cysteines 128 and 208 form a disulfide. A helical membrane pass occupies residues V130–D152. T140 provides a ligand contact to ergotamine. A DRY motif; important for ligand-induced conformation changes motif is present at residues D152 to Y154. Over R153–S168 the chain is Cytoplasmic. Residues R169–I190 traverse the membrane as a helical segment. The Extracellular portion of the chain corresponds to P191–N214. N204 and N205 each carry an N-linked (GlcNAc...) asparagine glycan. L210 contacts ergotamine. The chain crosses the membrane as a helical span at residues F215–L237. The Cytoplasmic portion of the chain corresponds to T238–K312. Residues D274–Q302 form a disordered region. Residues P288 to R298 show a composition bias toward basic residues. Residues V313–L337 form a helical membrane-spanning segment. Residues C338 and C342 are joined by a disulfide bond. Over C338–E348 the chain is Extracellular. The chain crosses the membrane as a helical span at residues K349–L371. Residues N365–Y369 carry the NPxxY motif; important for ligand-induced conformation changes and signaling motif. At F372 to V459 the chain is on the cytoplasmic side. The PDZ-binding signature appears at S457–V459.

The protein belongs to the G-protein coupled receptor 1 family. Interacts with MPDZ. Interacts with ARRB2. Interacts with MPP3; this interaction stabilizes the receptor at the plasma membrane and prevents the desensitization of the HTR2C receptor-mediated calcium response. In terms of tissue distribution, detected in brain cortex, hypothalamus, brainstem and arcuate nucleus. Detected in the paraventricular nucleus of the hypothalamus.

Its subcellular location is the cell membrane. Functionally, G-protein coupled receptor for 5-hydroxytryptamine (serotonin). Also functions as a receptor for various drugs and psychoactive substances, including ergot alkaloid derivatives, 1-2,5,-dimethoxy-4-iodophenyl-2-aminopropane (DOI) and lysergic acid diethylamide (LSD). Ligand binding causes a conformation change that triggers signaling via guanine nucleotide-binding proteins (G proteins) and modulates the activity of downstream effectors. HTR2C is coupled to G(q)/G(11) G alpha proteins and activates phospholipase C-beta, releasing diacylglycerol (DAG) and inositol 1,4,5-trisphosphate (IP3) second messengers that modulate the activity of phosphatidylinositol 3-kinase and promote the release of Ca(2+) ions from intracellular stores, respectively. Beta-arrestin family members inhibit signaling via G proteins and mediate activation of alternative signaling pathways. Regulates neuronal activity via the activation of short transient receptor potential calcium channels in the brain, and thereby modulates the activation of pro-opiomelanocortin neurons and the release of CRH that then regulates the release of corticosterone. Plays a role in the regulation of appetite and eating behavior, responses to anxiogenic stimuli and stress. Plays a role in insulin sensitivity and glucose homeostasis. In Mus musculus (Mouse), this protein is 5-hydroxytryptamine receptor 2C.